A 338-amino-acid chain; its full sequence is RNA 3'-terminal phosphate cyclase (338 aa).

ATP-binding positions include Q103 and 283-287 (YLADQ). The Tele-AMP-histidine intermediate role is filled by H308.

The protein belongs to the RNA 3'-terminal cyclase family. Type 1 subfamily.

It is found in the cytoplasm. It catalyses the reaction a 3'-end 3'-phospho-ribonucleotide-RNA + ATP = a 3'-end 2',3'-cyclophospho-ribonucleotide-RNA + AMP + diphosphate. In terms of biological role, catalyzes the conversion of 3'-phosphate to a 2',3'-cyclic phosphodiester at the end of RNA. The mechanism of action of the enzyme occurs in 3 steps: (A) adenylation of the enzyme by ATP; (B) transfer of adenylate to an RNA-N3'P to produce RNA-N3'PP5'A; (C) and attack of the adjacent 2'-hydroxyl on the 3'-phosphorus in the diester linkage to produce the cyclic end product. The biological role of this enzyme is unknown but it is likely to function in some aspects of cellular RNA processing. In Escherichia coli O6:K15:H31 (strain 536 / UPEC), this protein is RNA 3'-terminal phosphate cyclase.